We begin with the raw amino-acid sequence, 654 residues long: Coiled-coil domain-containing protein 30 (654 aa).

The tract at residues 38 to 65 (TLESRRDPNSSLQKEFPQHQDEDQSRAA) is disordered. The span at 53-62 (FPQHQDEDQS) shows a compositional bias: basic and acidic residues. Coiled coils occupy residues 97–244 (REER…LDNA) and 276–559 (KSQQ…QIIR). The segment at 614–654 (AAAIPKSPEPLSRSQDSESGYINVTSLKETHNTQGDQKPEL) is disordered. Polar residues predominate over residues 625–654 (SRSQDSESGYINVTSLKETHNTQGDQKPEL).

This sequence belongs to the prefoldin subunit beta family.

This Mus musculus (Mouse) protein is Coiled-coil domain-containing protein 30 (Ccdc30).